The primary structure comprises 66 residues: DNA gyrase inhibitor YacG (66 aa).

Zn(2+) is bound by residues Cys9, Cys12, Cys28, and Cys32.

It belongs to the DNA gyrase inhibitor YacG family. In terms of assembly, interacts with GyrB. Zn(2+) is required as a cofactor.

Its function is as follows. Inhibits all the catalytic activities of DNA gyrase by preventing its interaction with DNA. Acts by binding directly to the C-terminal domain of GyrB, which probably disrupts DNA binding by the gyrase. This Pseudomonas fluorescens (strain Pf0-1) protein is DNA gyrase inhibitor YacG.